A 244-amino-acid polypeptide reads, in one-letter code: Adiponectin (244 aa).

An N-terminal signal peptide occupies residues 1–18 (MLLLGAVLLLLALPGHDQ). Threonine 21 and threonine 22 each carry an O-linked (GalNAc...) threonine glycan. A 5-hydroxylysine modification is found at lysine 33. An S-(2-succinyl)cysteine modification is found at cysteine 36. The tract at residues 40–101 (MAGIPGHPGH…RGFPGIQGRK (62 aa)) is disordered. The region spanning 42-107 (GIPGHPGHNG…QGRKGEPGEG (66 aa)) is the Collagen-like domain. 4-hydroxyproline is present on residues proline 44, proline 47, and proline 53. A compositionally biased stretch (basic and acidic residues) spans 55–70 (RDGRDGTPGEKGEKGD). Lysine 65 and lysine 68 each carry 5-hydroxylysine. Residues lysine 65 and lysine 68 are each glycosylated (O-linked (Gal...) hydroxylysine; partial). 2 positions are modified to 4-hydroxyproline; partial: proline 71 and proline 76. 5-hydroxylysine is present on lysine 77. Lysine 77 is a glycosylation site (O-linked (Gal...) hydroxylysine; partial). The residue at position 91 (proline 91) is a 4-hydroxyproline. At proline 95 the chain carries 4-hydroxyproline; partial. Lysine 101 is modified (5-hydroxylysine). Lysine 101 is a glycosylation site (O-linked (Gal...) hydroxylysine; partial). In terms of domain architecture, C1q spans 108–244 (AYVYRSAFSV…TGFLLYHDTN (137 aa)).

As to quaternary structure, homomultimer. Forms trimers, hexamers and 12- to 18-mers. The trimers (low molecular weight complexes / LMW) are assembled via non-covalent interactions of the collagen-like domains in a triple helix and hydrophobic interactions within the globular C1q domain. Several trimers can associate to form disulfide-linked hexamers (middle molecular weight complexes / MMW) and larger complexes (higher molecular weight / HMW). The HMW-complex assembly is also modulated by the degree of lysine hydroxylation and glycosylation. LMW, MMW and HMW complexes bind to HBEGF, MMW and HMW complexes bind to PDGFB, and HMW complex binds to FGF2. Interacts with CTRP9 via the C1q domain (heterotrimeric complex). HMW complexes are more extensively glycosylated than smaller oligomers. Hydroxylation and glycosylation of the lysine residues within the collagen-like domain of adiponectin seem to be critically involved in regulating the formation and/or secretion of HMW complexes and consequently contribute to the insulin-sensitizing activity of adiponectin in hepatocytes. Post-translationally, O-glycosylated. Not N-glycosylated. O-linked glycans on hydroxylysines consist of Glc-Gal disaccharides bound to the oxygen atom of post-translationally added hydroxyl groups. Sialylated to varying degrees depending on tissue. Thr-22 appears to be the major site of sialylation. Higher sialylation found in SGBS adipocytes than in HEK fibroblasts. Sialylation is not required neither for heterodimerization nor for secretion. Not sialylated on the glycosylated hydroxylysines. Desialylated forms are rapidly cleared from the circulation. In terms of processing, succination of Cys-36 by the Krebs cycle intermediate fumarate, which leads to S-(2-succinyl)cysteine residues, inhibits polymerization and secretion of adiponectin. Adiponectin is a major target for succination in both adipocytes and adipose tissue of diabetic mammals. It was proposed that succination of proteins is a biomarker of mitochondrial stress and accumulation of Krebs cycle intermediates in adipose tissue in diabetes and that succination of adiponectin may contribute to the decrease in plasma adiponectin in diabetes. In terms of tissue distribution, synthesized exclusively by adipocytes and secreted into plasma.

It is found in the secreted. Its activity is regulated as follows. Polymerization and secretion of adiponectin is inhibited by succination of cysteine residues by the Krebs cycle intermediate fumarate, which leads to S-(2-succinyl)cysteine residues. Its function is as follows. Important adipokine involved in the control of fat metabolism and insulin sensitivity, with direct anti-diabetic, anti-atherogenic and anti-inflammatory activities. Stimulates AMPK phosphorylation and activation in the liver and the skeletal muscle, enhancing glucose utilization and fatty-acid combustion. Antagonizes TNF-alpha by negatively regulating its expression in various tissues such as liver and macrophages, and also by counteracting its effects. Inhibits endothelial NF-kappa-B signaling through a cAMP-dependent pathway. May play a role in cell growth, angiogenesis and tissue remodeling by binding and sequestering various growth factors with distinct binding affinities, depending on the type of complex, LMW, MMW or HMW. The chain is Adiponectin (ADIPOQ) from Homo sapiens (Human).